Here is a 579-residue protein sequence, read N- to C-terminus: MFS-type transporter ppz2 (579 aa).

A disordered region spans residues 1 to 23 (MQTATALEDSANAPSPAASSQGQ). Over residues 10–20 (SANAPSPAASS) the composition is skewed to low complexity. N-linked (GlcNAc...) asparagine glycosylation occurs at Asn-38. 14 helical membrane-spanning segments follow: residues 48-68 (ALIM…NTII), 83-103 (AAYT…TMVW), 121-141 (LCFF…MLIA), 145-165 (IQGI…GDLF), 171-191 (GLYY…GPVV), 203-223 (WCFY…ILLL), 236-256 (IAAI…MILL), 269-289 (SATV…CFSW), 298-318 (LLPV…ACFI), 336-356 (AVLG…AVSI), 374-394 (LTPI…FIDL), 403-423 (IIVF…APMV), 438-460 (TSAY…QTVF), and 516-536 (SMWI…PFLG).

Belongs to the major facilitator superfamily. TCR/Tet family.

It is found in the membrane. MFS-type transporter; part of the gene cluster that mediates the biosynthesis of pyrrolopyrazines, secondary metabolites showing insecticidal activity. Probably involved in the secretion of peramine and other pyrrolopyrazines. The chain is MFS-type transporter ppz2 from Metarhizium majus (strain ARSEF 297).